Consider the following 474-residue polypeptide: Alkylcitrate dehydratase phiI (474 aa).

This sequence belongs to the PrpD family. Monomer.

The catalysed reaction is (4E,11E)-2-hydroxytrideca-4,11-dien-1,2,3-tricarboxylate + 2 H(+) = [4-(deca-1,8-diyl)-2,5-dioxo-2,5-dihydro-3-furanyl]acetate + 2 H2O. It participates in secondary metabolite biosynthesis. In terms of biological role, alkylcitrate dehydratasee; part of the gene cluster that mediates the biosynthesis of the antihypercholesterolemic agents phomoidrides which are dimeric anhydrides. Within the pathway, the alkylcitrate synthase (ACS) tstiJ and the alkylcitrate dehydratase (ACDH) tstI produce the decarboxylated monomeric anhydrides by coupling the C12-fatty acyl product from phiA with oxalacetic acid. The pathway begins with the highly reducing polyketide synthase tstA that catalyzes the formation of a C12-fatty acyl-ACP, starting from one acetate and 5 malonate units. The hydrolase tstM is involved in the release of the C12-fatty acyl chain from phiA. The alkylcitrate synthase (ACS) tstJ and the alkylcitrate dehydratase (ACDH) tstI then give rise to decarboxylated monomeric anhydrides by coupling the C12-fatty acyl chain with oxalacetic acid. The cyclase tstC is responsible for the dimerization of the monomeric anhydrides which leads to the production of prephomoidride that contains the characteristic bicyclo[4.3.1]deca-1,6-diene system of phomoidrides. Iterative oxidation catalyzed by the alpha-ketoglutarate-dependent dioxygenase tstK produced then phomoidride A. Finally, the methyltransferase tstE converts phomoidride A to phomoidride B via an acetalization reaction. The phosphatidylethanolamine-binding protein tstB and tstN are not essential for dimerization and their functions have still to be determined. This Talaromyces stipitatus (strain ATCC 10500 / CBS 375.48 / QM 6759 / NRRL 1006) (Penicillium stipitatum) protein is Alkylcitrate dehydratase phiI.